We begin with the raw amino-acid sequence, 62 residues long: uncharacterized protein (62 aa).

Its subcellular location is the mitochondrion. This is an uncharacterized protein from Marchantia polymorpha (Common liverwort).